Consider the following 380-residue polypeptide: Queuine tRNA-ribosyltransferase (380 aa).

Residue D95 is the Proton acceptor of the active site. Residues 95–99 (DSGGF), D149, Q192, and G219 contribute to the substrate site. Positions 250–256 (GVGSPDS) are RNA binding. Catalysis depends on D269, which acts as the Nucleophile. Residues 274–278 (TRIGR) form an RNA binding; important for wobble base 34 recognition region. Zn(2+)-binding residues include C307, C309, C312, and H338.

This sequence belongs to the queuine tRNA-ribosyltransferase family. As to quaternary structure, homodimer. Within each dimer, one monomer is responsible for RNA recognition and catalysis, while the other monomer binds to the replacement base PreQ1. Requires Zn(2+) as cofactor.

It catalyses the reaction 7-aminomethyl-7-carbaguanine + guanosine(34) in tRNA = 7-aminomethyl-7-carbaguanosine(34) in tRNA + guanine. It functions in the pathway tRNA modification; tRNA-queuosine biosynthesis. Catalyzes the base-exchange of a guanine (G) residue with the queuine precursor 7-aminomethyl-7-deazaguanine (PreQ1) at position 34 (anticodon wobble position) in tRNAs with GU(N) anticodons (tRNA-Asp, -Asn, -His and -Tyr). Catalysis occurs through a double-displacement mechanism. The nucleophile active site attacks the C1' of nucleotide 34 to detach the guanine base from the RNA, forming a covalent enzyme-RNA intermediate. The proton acceptor active site deprotonates the incoming PreQ1, allowing a nucleophilic attack on the C1' of the ribose to form the product. After dissociation, two additional enzymatic reactions on the tRNA convert PreQ1 to queuine (Q), resulting in the hypermodified nucleoside queuosine (7-(((4,5-cis-dihydroxy-2-cyclopenten-1-yl)amino)methyl)-7-deazaguanosine). This is Queuine tRNA-ribosyltransferase from Geobacillus thermodenitrificans (strain NG80-2).